We begin with the raw amino-acid sequence, 238 residues long: DNA repair protein RAD59 (238 aa).

The protein belongs to the RAD52 family. Interacts with RAD51 and RAD52.

The protein localises to the nucleus. Functionally, involved in the repair of double-strand breaks in DNA during vegetative growth via recombination and single-strand annealing. Anneals complementary single-stranded DNA. This chain is DNA repair protein RAD59 (RAD59), found in Saccharomyces cerevisiae (strain ATCC 204508 / S288c) (Baker's yeast).